The sequence spans 225 residues: UPF0758 protein BB3258 (225 aa).

The MPN domain maps to 103-225; the sequence is ALANPDLVRR…TVSMAAQGHL (123 aa). The Zn(2+) site is built by histidine 174, histidine 176, and aspartate 187. A JAMM motif motif is present at residues 174 to 187; it reads HNHPGGTAAASAAD.

Belongs to the UPF0758 family.

This chain is UPF0758 protein BB3258, found in Bordetella bronchiseptica (strain ATCC BAA-588 / NCTC 13252 / RB50) (Alcaligenes bronchisepticus).